Consider the following 367-residue polypeptide: tRNA-specific 2-thiouridylase MnmA (367 aa).

Residues 13–20 (GLSGGVDS) and Met39 contribute to the ATP site. The interval 99-101 (NPD) is interaction with target base in tRNA. Cys104 functions as the Nucleophile in the catalytic mechanism. Cys104 and Cys200 are oxidised to a cystine. Gly128 contributes to the ATP binding site. An interaction with tRNA region spans residues 150-152 (KDQ). Residue Cys200 is the Cysteine persulfide intermediate of the active site. The tract at residues 307–308 (RY) is interaction with tRNA.

Belongs to the MnmA/TRMU family.

It is found in the cytoplasm. The catalysed reaction is S-sulfanyl-L-cysteinyl-[protein] + uridine(34) in tRNA + AH2 + ATP = 2-thiouridine(34) in tRNA + L-cysteinyl-[protein] + A + AMP + diphosphate + H(+). Its function is as follows. Catalyzes the 2-thiolation of uridine at the wobble position (U34) of tRNA, leading to the formation of s(2)U34. This Neisseria meningitidis serogroup C (strain 053442) protein is tRNA-specific 2-thiouridylase MnmA.